The chain runs to 277 residues: Exosome complex component Rrp42 (277 aa).

This sequence belongs to the RNase PH family. Rrp42 subfamily. In terms of assembly, component of the archaeal exosome complex. Forms a hexameric ring-like arrangement composed of 3 Rrp41-Rrp42 heterodimers. The hexameric ring associates with a trimer of Rrp4 and/or Csl4 subunits.

The protein localises to the cytoplasm. Functionally, non-catalytic component of the exosome, which is a complex involved in RNA degradation. Contributes to the structuring of the Rrp41 active site. This is Exosome complex component Rrp42 from Pyrococcus furiosus (strain ATCC 43587 / DSM 3638 / JCM 8422 / Vc1).